A 108-amino-acid polypeptide reads, in one-letter code: UPF0235 protein Rpal_0418 (108 aa).

It belongs to the UPF0235 family.

The sequence is that of UPF0235 protein Rpal_0418 from Rhodopseudomonas palustris (strain TIE-1).